The primary structure comprises 376 residues: Ribosomal RNA large subunit methyltransferase G (376 aa).

This sequence belongs to the methyltransferase superfamily. RlmG family.

It is found in the cytoplasm. The enzyme catalyses guanosine(1835) in 23S rRNA + S-adenosyl-L-methionine = N(2)-methylguanosine(1835) in 23S rRNA + S-adenosyl-L-homocysteine + H(+). Specifically methylates the guanine in position 1835 (m2G1835) of 23S rRNA. The polypeptide is Ribosomal RNA large subunit methyltransferase G (Vibrio vulnificus (strain CMCP6)).